A 204-amino-acid polypeptide reads, in one-letter code: Recombination protein RecR (204 aa).

A C4-type zinc finger spans residues 63–78 (CRICFNVADSELCPIC). The Toprim domain maps to 86–181 (NKICVVEQPQ…KVTRLARGLP (96 aa)).

This sequence belongs to the RecR family.

In terms of biological role, may play a role in DNA repair. It seems to be involved in an RecBC-independent recombinational process of DNA repair. It may act with RecF and RecO. This chain is Recombination protein RecR, found in Dehalococcoides mccartyi (strain ATCC BAA-2266 / KCTC 15142 / 195) (Dehalococcoides ethenogenes (strain 195)).